A 164-amino-acid polypeptide reads, in one-letter code: Pathogenesis-related protein PRB1-2 (164 aa).

An N-terminal signal peptide occupies residues 1–24 (MQTPKLAILLALAMAAAMVNLSQA). Gln25 bears the Pyrrolidone carboxylic acid mark. Residues 34 to 152 (PHNAARSAVG…NRGVFITCNY (119 aa)) form the SCP domain. 3 cysteine pairs are disulfide-bonded: Cys68–Cys140, Cys113–Cys119, and Cys135–Cys150.

The protein belongs to the CRISP family.

Functionally, probably involved in the defense reaction of plants against pathogens. The sequence is that of Pathogenesis-related protein PRB1-2 from Hordeum vulgare (Barley).